A 187-amino-acid chain; its full sequence is Large ribosomal subunit protein uL22 (187 aa).

2 stretches are compositionally biased toward basic and acidic residues: residues T158–K168 and R178–E187. Positions T158–E187 are disordered.

Belongs to the universal ribosomal protein uL22 family.

The chain is Large ribosomal subunit protein uL22 (RpL17) from Anopheles gambiae (African malaria mosquito).